The sequence spans 261 residues: Enolase-phosphatase E1 (261 aa).

The Mg(2+) site is built by D16 and E18. Substrate-binding positions include 153–154 (SS) and K187. D212 is a binding site for Mg(2+).

The protein belongs to the HAD-like hydrolase superfamily. MasA/MtnC family. In terms of assembly, monomer. Mg(2+) is required as a cofactor.

Its subcellular location is the cytoplasm. The protein resides in the nucleus. The catalysed reaction is 5-methylsulfanyl-2,3-dioxopentyl phosphate + H2O = 1,2-dihydroxy-5-(methylsulfanyl)pent-1-en-3-one + phosphate. It participates in amino-acid biosynthesis; L-methionine biosynthesis via salvage pathway; L-methionine from S-methyl-5-thio-alpha-D-ribose 1-phosphate: step 3/6. It functions in the pathway amino-acid biosynthesis; L-methionine biosynthesis via salvage pathway; L-methionine from S-methyl-5-thio-alpha-D-ribose 1-phosphate: step 4/6. Bifunctional enzyme that catalyzes the enolization of 2,3-diketo-5-methylthiopentyl-1-phosphate (DK-MTP-1-P) into the intermediate 2-hydroxy-3-keto-5-methylthiopentenyl-1-phosphate (HK-MTPenyl-1-P), which is then dephosphorylated to form the acireductone 1,2-dihydroxy-3-keto-5-methylthiopentene (DHK-MTPene). The chain is Enolase-phosphatase E1 (enoph1) from Danio rerio (Zebrafish).